The chain runs to 201 residues: 3-isopropylmalate dehydratase small subunit (201 aa).

This sequence belongs to the LeuD family. LeuD type 1 subfamily. Heterodimer of LeuC and LeuD.

The enzyme catalyses (2R,3S)-3-isopropylmalate = (2S)-2-isopropylmalate. It functions in the pathway amino-acid biosynthesis; L-leucine biosynthesis; L-leucine from 3-methyl-2-oxobutanoate: step 2/4. Catalyzes the isomerization between 2-isopropylmalate and 3-isopropylmalate, via the formation of 2-isopropylmaleate. This Shigella dysenteriae serotype 1 (strain Sd197) protein is 3-isopropylmalate dehydratase small subunit.